The primary structure comprises 210 residues: Orotate phosphoribosyltransferase (210 aa).

Residues Arg96, Lys100, His102, and 122–130 (EDLISTGGS) each bind 5-phospho-alpha-D-ribose 1-diphosphate. Orotate is bound at residue Ser126.

This sequence belongs to the purine/pyrimidine phosphoribosyltransferase family. PyrE subfamily. In terms of assembly, homodimer. Mg(2+) serves as cofactor.

It carries out the reaction orotidine 5'-phosphate + diphosphate = orotate + 5-phospho-alpha-D-ribose 1-diphosphate. It functions in the pathway pyrimidine metabolism; UMP biosynthesis via de novo pathway; UMP from orotate: step 1/2. In terms of biological role, catalyzes the transfer of a ribosyl phosphate group from 5-phosphoribose 1-diphosphate to orotate, leading to the formation of orotidine monophosphate (OMP). This chain is Orotate phosphoribosyltransferase (pyrE), found in Streptococcus pneumoniae serotype 19F (strain G54).